A 264-amino-acid chain; its full sequence is Elongation factor Ts (264 aa).

The interval 76-79 (TDFV) is involved in Mg(2+) ion dislocation from EF-Tu.

It belongs to the EF-Ts family.

Its subcellular location is the cytoplasm. Functionally, associates with the EF-Tu.GDP complex and induces the exchange of GDP to GTP. It remains bound to the aminoacyl-tRNA.EF-Tu.GTP complex up to the GTP hydrolysis stage on the ribosome. The sequence is that of Elongation factor Ts from Deinococcus deserti (strain DSM 17065 / CIP 109153 / LMG 22923 / VCD115).